The primary structure comprises 422 residues: Probable protease eep (422 aa).

His18 contributes to the Zn(2+) binding site. Residue Glu19 is part of the active site. Zn(2+) is bound at residue His22. The next 3 membrane-spanning stretches (helical) occupy residues 176–196, 349–369, and 394–414; these read FAGP…AVFL, VVFL…LPIP, and EGII…LVTW. The PDZ domain maps to 179 to 273; that stretch reads PMNNFILGFI…EEQLTVTPEK (95 aa).

It belongs to the peptidase M50B family. Requires Zn(2+) as cofactor.

Its subcellular location is the cell membrane. Involved in production of the peptide pheromone cAD1. The protein is Probable protease eep (eep) of Enterococcus faecalis (strain ATCC 700802 / V583).